The following is a 288-amino-acid chain: Acetyl-coenzyme A carboxylase carboxyl transferase subunit beta (288 aa).

The 255-residue stretch at 34 to 288 (LFAKCPGCKQ…TLLSFHGGVQ (255 aa)) folds into the CoA carboxyltransferase N-terminal domain. Zn(2+) contacts are provided by cysteine 38, cysteine 41, cysteine 56, and cysteine 59. The C4-type zinc finger occupies 38–59 (CPGCKQAIYQKDLGQAKICPNC).

Belongs to the AccD/PCCB family. As to quaternary structure, acetyl-CoA carboxylase is a heterohexamer composed of biotin carboxyl carrier protein (AccB), biotin carboxylase (AccC) and two subunits each of ACCase subunit alpha (AccA) and ACCase subunit beta (AccD). The cofactor is Zn(2+).

It localises to the cytoplasm. It catalyses the reaction N(6)-carboxybiotinyl-L-lysyl-[protein] + acetyl-CoA = N(6)-biotinyl-L-lysyl-[protein] + malonyl-CoA. It participates in lipid metabolism; malonyl-CoA biosynthesis; malonyl-CoA from acetyl-CoA: step 1/1. Functionally, component of the acetyl coenzyme A carboxylase (ACC) complex. Biotin carboxylase (BC) catalyzes the carboxylation of biotin on its carrier protein (BCCP) and then the CO(2) group is transferred by the transcarboxylase to acetyl-CoA to form malonyl-CoA. This chain is Acetyl-coenzyme A carboxylase carboxyl transferase subunit beta, found in Streptococcus thermophilus (strain ATCC BAA-491 / LMD-9).